We begin with the raw amino-acid sequence, 162 residues long: Ribosomal RNA large subunit methyltransferase H (162 aa).

G108 is an S-adenosyl-L-methionine binding site.

It belongs to the RNA methyltransferase RlmH family. Homodimer.

It is found in the cytoplasm. The catalysed reaction is pseudouridine(1915) in 23S rRNA + S-adenosyl-L-methionine = N(3)-methylpseudouridine(1915) in 23S rRNA + S-adenosyl-L-homocysteine + H(+). Its function is as follows. Specifically methylates the pseudouridine at position 1915 (m3Psi1915) in 23S rRNA. The protein is Ribosomal RNA large subunit methyltransferase H of Methylobacterium sp. (strain 4-46).